The following is a 209-amino-acid chain: Large ribosomal subunit protein uL3 (209 aa).

Belongs to the universal ribosomal protein uL3 family. Part of the 50S ribosomal subunit. Forms a cluster with proteins L14 and L19.

One of the primary rRNA binding proteins, it binds directly near the 3'-end of the 23S rRNA, where it nucleates assembly of the 50S subunit. The sequence is that of Large ribosomal subunit protein uL3 from Clostridium botulinum (strain Okra / Type B1).